A 341-amino-acid chain; its full sequence is Nicotinate-nucleotide--dimethylbenzimidazole phosphoribosyltransferase (341 aa).

The active-site Proton acceptor is Glu-310.

This sequence belongs to the CobT family.

It carries out the reaction 5,6-dimethylbenzimidazole + nicotinate beta-D-ribonucleotide = alpha-ribazole 5'-phosphate + nicotinate + H(+). Its pathway is nucleoside biosynthesis; alpha-ribazole biosynthesis; alpha-ribazole from 5,6-dimethylbenzimidazole: step 1/2. In terms of biological role, catalyzes the synthesis of alpha-ribazole-5'-phosphate from nicotinate mononucleotide (NAMN) and 5,6-dimethylbenzimidazole (DMB). This chain is Nicotinate-nucleotide--dimethylbenzimidazole phosphoribosyltransferase, found in Vibrio cholerae serotype O1 (strain ATCC 39315 / El Tor Inaba N16961).